The following is a 248-amino-acid chain: MKGLKGLLVLALGFTGLQVFGQQNPDIKIEKLKDNLYVYTTYNTFKGTKYAANAVYMVTDKGVVVIDSPWGEDKFKSFTDEIYKKHGKKVIMNIATHSHDDRAGGLEYFGKLGAKTYSTKMTDSILAKENKPRAKYTFDNNKSFKVGKTEFQVYYPGKGHTADNVVVWFPKDKVLVGGCIVKSGDSKDLGFIGEAYVNDWTQSIHNIQQKFPDVQYVVAGHDDWKDQTSIQHTLDLISEYQQKQKASN.

The N-terminal stretch at 1–21 (MKGLKGLLVLALGFTGLQVFG) is a signal peptide. The Zn(2+) site is built by His-97, His-99, Asp-101, His-160, and Cys-179. Lys-182 contributes to the substrate binding site. His-221 is a binding site for Zn(2+).

The protein belongs to the metallo-beta-lactamase superfamily. Class-B beta-lactamase family. As to quaternary structure, monomer. The cofactor is Zn(2+).

It localises to the periplasm. It catalyses the reaction a beta-lactam + H2O = a substituted beta-amino acid. In terms of biological role, confers resistance to the different beta-lactams antibiotics (penicillin, cephalosporin and carbapenem) via the hydrolysis of the beta-lactam ring. The chain is Metallo-beta-lactamase type 2 (blaB8) from Elizabethkingia meningoseptica (Chryseobacterium meningosepticum).